Consider the following 105-residue polypeptide: Replication initiation control protein YabA (105 aa).

Positions 79, 81, 95, and 98 each coordinate Zn(2+).

It belongs to the YabA family. Homotetramer. Interacts with both DnaA and DnaN, acting as a bridge between these two proteins. Zn(2+) serves as cofactor.

It is found in the cytoplasm. The protein resides in the nucleoid. Functionally, involved in control of chromosome replication initiation. Inhibits the cooperative binding of DnaA to the oriC region, thus negatively regulating initiation of chromosome replication. Inhibits the ability of DnaA-ATP to form a helix on DNA; does not disassemble preformed DnaA-DNA helices. Decreases the residence time of DnaA on the chromosome at its binding sites (oriC, replication forks and promoter-binding sites). Tethers DnaA to the replication machinery via the DNA polymerase beta sliding clamp subunit (dnaN). Associates with oriC and other DnaA targets on the chromosome in a DnaA-dependent manner. This Streptococcus pneumoniae serotype 2 (strain D39 / NCTC 7466) protein is Replication initiation control protein YabA.